Reading from the N-terminus, the 309-residue chain is 4-hydroxy-tetrahydrodipicolinate synthase (309 aa).

Residue Thr-51 participates in pyruvate binding. The active-site Proton donor/acceptor is the Tyr-140. Lys-168 acts as the Schiff-base intermediate with substrate in catalysis. Residue Ile-209 participates in pyruvate binding.

This sequence belongs to the DapA family. As to quaternary structure, homotetramer; dimer of dimers.

Its subcellular location is the cytoplasm. The catalysed reaction is L-aspartate 4-semialdehyde + pyruvate = (2S,4S)-4-hydroxy-2,3,4,5-tetrahydrodipicolinate + H2O + H(+). The protein operates within amino-acid biosynthesis; L-lysine biosynthesis via DAP pathway; (S)-tetrahydrodipicolinate from L-aspartate: step 3/4. Its function is as follows. Catalyzes the condensation of (S)-aspartate-beta-semialdehyde [(S)-ASA] and pyruvate to 4-hydroxy-tetrahydrodipicolinate (HTPA). This Streptococcus uberis (strain ATCC BAA-854 / 0140J) protein is 4-hydroxy-tetrahydrodipicolinate synthase.